A 1038-amino-acid chain; its full sequence is Bone morphogenetic protein receptor type-2 (1038 aa).

Residues 1-26 (MTSSLHRPFRVPWLLWAVLLVSTTAA) form the signal peptide. The Extracellular segment spans residues 27 to 150 (SQNQERLCAF…PPHSFNRDET (124 aa)). 5 cysteine pairs are disulfide-bonded: cysteine 34–cysteine 66, cysteine 60–cysteine 84, cysteine 94–cysteine 117, cysteine 99–cysteine 116, and cysteine 118–cysteine 123. Asparagine 55 is a glycosylation site (N-linked (GlcNAc...) asparagine). Residue asparagine 110 is glycosylated (N-linked (GlcNAc...) asparagine). N-linked (GlcNAc...) asparagine glycosylation occurs at asparagine 126. Residues 151 to 171 (IIIALASVSVLAVLIVALCFG) form a helical membrane-spanning segment. At 172 to 1038 (YRMLTGDRKQ…VSKDIGMNCL (867 aa)) the chain is on the cytoplasmic side. A Protein kinase domain is found at 203-504 (LKLLELIGRG…QCAEERMAEL (302 aa)). Residues 209–217 (IGRGRYGAV), lysine 230, and 280–282 (EYY) each bind ATP. Residue aspartate 333 is the Proton acceptor of the active site. ATP contacts are provided by residues 337–338 (RN) and aspartate 351. Phosphothreonine is present on threonine 379. Position 586 is a phosphoserine (serine 586). The disordered stretch occupies residues 593 to 626 (QAQARIPSPETSVTSLSTNTTTTNTTGLTPSTGM). A compositionally biased stretch (low complexity) spans 603 to 626 (TSVTSLSTNTTTTNTTGLTPSTGM). A phosphoserine mark is found at serine 680 and serine 681. The tract at residues 746-769 (PKQQNLPKRPTSLPLNTKNSTKEP) is disordered. A Phosphoserine modification is found at serine 843. Residues 872–896 (RREQQAGHDEGVLDRLVDRRERPLE) show a composition bias toward basic and acidic residues. Positions 872-974 (RREQQAGHDE…SGSGEKIKRR (103 aa)) are disordered. 2 stretches are compositionally biased toward polar residues: residues 909–924 (PCSE…TSTA) and 937–964 (RPNS…QDGK).

Belongs to the protein kinase superfamily. TKL Ser/Thr protein kinase family. TGFB receptor subfamily. As to quaternary structure, interacts with GDF5. Interacts with BMP4. Interacts with SCUBE3. Interacts with TSC22D1/TSC-22. Interacts with activin A/INHBA. The cofactor is Mg(2+). Mn(2+) serves as cofactor.

It is found in the cell membrane. It carries out the reaction L-threonyl-[receptor-protein] + ATP = O-phospho-L-threonyl-[receptor-protein] + ADP + H(+). The enzyme catalyses L-seryl-[receptor-protein] + ATP = O-phospho-L-seryl-[receptor-protein] + ADP + H(+). Functionally, on ligand binding, forms a receptor complex consisting of two type II and two type I transmembrane serine/threonine kinases. Type II receptors phosphorylate and activate type I receptors which autophosphorylate, then bind and activate SMAD transcriptional regulators. Can also mediate signaling through the activation of the p38MAPK cascade. Binds to BMP7, BMP2 and, less efficiently, BMP4. Binding is weak but enhanced by the presence of type I receptors for BMPs. Mediates induction of adipogenesis by GDF6. Promotes signaling also by binding to activin A/INHBA. The polypeptide is Bone morphogenetic protein receptor type-2 (Bmpr2) (Mus musculus (Mouse)).